The following is an 859-amino-acid chain: Photoactivated adenylate cyclase subunit beta (859 aa).

One can recognise a BLUF 1 domain in the interval Leu56–Lys149. The Guanylate cyclase 1 domain occupies Val205–Ala333. The disordered stretch occupies residues Arg420–Gln443. Positions Leu471–Thr563 constitute a BLUF 2 domain. The Guanylate cyclase 2 domain maps to Val619 to Glu748. The disordered stretch occupies residues Ala813 to Arg859. Over residues Arg815–Phe831 the composition is skewed to basic and acidic residues. Residues Arg846 to Arg859 show a composition bias toward polar residues.

This sequence belongs to the adenylyl cyclase class-4/guanylyl cyclase family. In terms of assembly, heterotetramer of two alpha and two beta subunits. FAD is required as a cofactor.

Its subcellular location is the cell projection. The protein resides in the cilium. It localises to the flagellum. The catalysed reaction is ATP = 3',5'-cyclic AMP + diphosphate. With respect to regulation, activity increased by up to 80-fold under blue light. Acts as a blue light photoreceptor for the step-up photophobic response. Mediates photoavoidance. This is Photoactivated adenylate cyclase subunit beta from Euglena gracilis.